The sequence spans 127 residues: Probable toxin y4kH (127 aa).

The protein belongs to the MbcT/ParT/Res family.

Probable toxic component of a type II toxin-antitoxin (TA) system. It is not known which gene encodes its antitoxin. This is Probable toxin y4kH from Sinorhizobium fredii (strain NBRC 101917 / NGR234).